Here is a 334-residue protein sequence, read N- to C-terminus: Retinol dehydrogenase 13 (334 aa).

S2 bears the N-acetylserine mark. 45–51 (GANTGIG) contributes to the NADP(+) binding site. Position 174 (S174) interacts with substrate. Y200 functions as the Proton acceptor in the catalytic mechanism.

Belongs to the short-chain dehydrogenases/reductases (SDR) family.

Its subcellular location is the mitochondrion inner membrane. The catalysed reaction is all-trans-retinol + NADP(+) = all-trans-retinal + NADPH + H(+). Its pathway is cofactor metabolism; retinol metabolism. In terms of biological role, retinol dehydrogenase with a clear preference for NADP. Oxidizes all-trans-retinol, but seems to reduce all-trans-retinal with much higher efficiency. Has no activity towards steroid. This Mus musculus (Mouse) protein is Retinol dehydrogenase 13 (Rdh13).